Consider the following 102-residue polypeptide: Small ribosomal subunit protein uS10 (102 aa).

The protein belongs to the universal ribosomal protein uS10 family. As to quaternary structure, part of the 30S ribosomal subunit.

In terms of biological role, involved in the binding of tRNA to the ribosomes. This Desulforamulus reducens (strain ATCC BAA-1160 / DSM 100696 / MI-1) (Desulfotomaculum reducens) protein is Small ribosomal subunit protein uS10.